The following is a 658-amino-acid chain: Palmitoyltransferase ZDHHC5-B (658 aa).

The Cytoplasmic portion of the chain corresponds to 1–24 (MPVGLSVGGALGDPSPSRPFRPSR). The chain crosses the membrane as a helical span at residues 25–45 (YVPVSAATAFLVGATTLFLCF). The Extracellular portion of the chain corresponds to 46–56 (TCPWLSEKFSS). The helical transmembrane segment at 57–77 (FIPLYNVVVFLFTLANFCMAT) threads the bilayer. Residues 78–159 (FMDPGVFPRA…NCIGRRNYRY (82 aa)) lie on the Cytoplasmic side of the membrane. Positions 115-165 (KWCSTCRFYRPPRCSHCSVCDNCVEEFDHHCPWVNNCIGRRNYRYFFLFLL) constitute a DHHC domain. Cys145 acts as the S-palmitoyl cysteine intermediate in catalysis. A helical transmembrane segment spans residues 160–180 (FFLFLLSLTVHIMDVFGFSLL). Residues 181–202 (YILHHTKQLDLVQSGVTMAVMC) lie on the Extracellular side of the membrane. Residues 203 to 223 (VAGLFFVPVAGLTGFHVVLVA) traverse the membrane as a helical segment. Topologically, residues 224-658 (RGRTTNEQVT…VGGTTYEISV (435 aa)) are cytoplasmic. 3 disordered regions span residues 306–419 (EIME…RSGS), 490–522 (ESLLTPSESPEFESAAHELSPPRPHPPHSLSTA), and 540–658 (QREG…EISV). A compositionally biased stretch (polar residues) spans 360-398 (PGKNHTASTHSSKMSRGNSMTESPSVPVTTGQPSYRSDP). The segment covering 407-419 (GCRGGAEGGRSGS) has biased composition (gly residues). Residues 565 to 575 (SSPPSRAPPLS) show a composition bias toward pro residues. Residues 619–633 (SMPNSTIKQNVANHN) show a composition bias toward polar residues. Positions 634–644 (THSHKPARGVK) are enriched in basic residues.

This sequence belongs to the DHHC palmitoyltransferase family. ERF2/ZDHHC9 subfamily.

Its subcellular location is the cell membrane. It carries out the reaction L-cysteinyl-[protein] + hexadecanoyl-CoA = S-hexadecanoyl-L-cysteinyl-[protein] + CoA. Palmitoyltransferase that catalyzes the addition of palmitate onto various protein substrates and is involved in a variety of cellular processes. This chain is Palmitoyltransferase ZDHHC5-B, found in Danio rerio (Zebrafish).